The following is a 129-amino-acid chain: Aspartate 1-decarboxylase (129 aa).

Ser25 functions as the Schiff-base intermediate with substrate; via pyruvic acid in the catalytic mechanism. At Ser25 the chain carries Pyruvic acid (Ser). Thr57 lines the substrate pocket. The Proton donor role is filled by Tyr58. 73-75 lines the substrate pocket; that stretch reads GAA.

This sequence belongs to the PanD family. In terms of assembly, heterooctamer of four alpha and four beta subunits. Pyruvate is required as a cofactor. In terms of processing, is synthesized initially as an inactive proenzyme, which is activated by self-cleavage at a specific serine bond to produce a beta-subunit with a hydroxyl group at its C-terminus and an alpha-subunit with a pyruvoyl group at its N-terminus.

It is found in the cytoplasm. The enzyme catalyses L-aspartate + H(+) = beta-alanine + CO2. It functions in the pathway cofactor biosynthesis; (R)-pantothenate biosynthesis; beta-alanine from L-aspartate: step 1/1. Its function is as follows. Catalyzes the pyruvoyl-dependent decarboxylation of aspartate to produce beta-alanine. The chain is Aspartate 1-decarboxylase from Chlorobium chlorochromatii (strain CaD3).